Consider the following 75-residue polypeptide: uncharacterized protein (75 aa).

This is an uncharacterized protein from Enterobacteria phage T4 (Bacteriophage T4).